We begin with the raw amino-acid sequence, 462 residues long: Jasmonoyl--L-amino acid synthetase GH3.3 (462 aa).

Ser-103 is a binding site for ATP. Ser-106 serves as a coordination point for jasmonate. Residues Thr-126, Asn-172, and 337 to 342 (GASEGW) each bind ATP. Residue 170–174 (TTNVY) coordinates an L-alpha-amino acid. Jasmonate is bound by residues 334-337 (AEYG) and Ser-339.

Belongs to the IAA-amido conjugating enzyme family. Expressed in green shoots and flowers.

It catalyses the reaction a jasmonate + an L-alpha-amino acid + ATP = a jasmonyl-L-amino acid + AMP + diphosphate + H(+). Functionally, catalyzes the synthesis of jasmonate-amino acid conjugates by adenylation. Catalyzes the conjugation of jasmonate (JA) to Ile when expressed in a heterologous system (E.coli). Catalyzes in vitro the conjugation of jasmonate (JA) to Ile, Phe, Leu, Met, Val and Trp. May catalyze the synthesis of indole-3-acetic acid (IAA)-amino acid conjugates, providing a mechanism for the plant to cope with the presence of excess auxin. The protein is Jasmonoyl--L-amino acid synthetase GH3.3 of Oryza sativa subsp. japonica (Rice).